Here is a 28-residue protein sequence, read N- to C-terminus: Endoglucanase (28 aa).

Catalysis depends on glutamate 20, which acts as the Nucleophile.

This sequence belongs to the glycosyl hydrolase 5 (cellulase A) family.

The protein resides in the cell membrane. It carries out the reaction Endohydrolysis of (1-&gt;4)-beta-D-glucosidic linkages in cellulose, lichenin and cereal beta-D-glucans.. In Schizophyllum commune (Split gill fungus), this protein is Endoglucanase.